The sequence spans 223 residues: Thiamine-phosphate synthase (223 aa).

Residues 37–41 and Asn69 contribute to the 4-amino-2-methyl-5-(diphosphooxymethyl)pyrimidine site; that span reads QLREK. Residues Asp70 and Asp89 each contribute to the Mg(2+) site. Residue Ser108 participates in 4-amino-2-methyl-5-(diphosphooxymethyl)pyrimidine binding. 134–136 provides a ligand contact to 2-[(2R,5Z)-2-carboxy-4-methylthiazol-5(2H)-ylidene]ethyl phosphate; that stretch reads TGT. Lys137 contacts 4-amino-2-methyl-5-(diphosphooxymethyl)pyrimidine. 2-[(2R,5Z)-2-carboxy-4-methylthiazol-5(2H)-ylidene]ethyl phosphate is bound by residues Gly167 and 187–188; that span reads VS. The segment at 197 to 223 is disordered; the sequence is AAATRKLQGSVDTASVESQLPSEEPSA. Residues 206–217 are compositionally biased toward polar residues; sequence SVDTASVESQLP.

This sequence belongs to the thiamine-phosphate synthase family. It depends on Mg(2+) as a cofactor.

It catalyses the reaction 2-[(2R,5Z)-2-carboxy-4-methylthiazol-5(2H)-ylidene]ethyl phosphate + 4-amino-2-methyl-5-(diphosphooxymethyl)pyrimidine + 2 H(+) = thiamine phosphate + CO2 + diphosphate. The enzyme catalyses 2-(2-carboxy-4-methylthiazol-5-yl)ethyl phosphate + 4-amino-2-methyl-5-(diphosphooxymethyl)pyrimidine + 2 H(+) = thiamine phosphate + CO2 + diphosphate. The catalysed reaction is 4-methyl-5-(2-phosphooxyethyl)-thiazole + 4-amino-2-methyl-5-(diphosphooxymethyl)pyrimidine + H(+) = thiamine phosphate + diphosphate. The protein operates within cofactor biosynthesis; thiamine diphosphate biosynthesis; thiamine phosphate from 4-amino-2-methyl-5-diphosphomethylpyrimidine and 4-methyl-5-(2-phosphoethyl)-thiazole: step 1/1. Its function is as follows. Condenses 4-methyl-5-(beta-hydroxyethyl)thiazole monophosphate (THZ-P) and 2-methyl-4-amino-5-hydroxymethyl pyrimidine pyrophosphate (HMP-PP) to form thiamine monophosphate (TMP). The polypeptide is Thiamine-phosphate synthase (Haloquadratum walsbyi (strain DSM 16790 / HBSQ001)).